The sequence spans 533 residues: 2,3-bisphosphoglycerate-independent phosphoglycerate mutase (533 aa).

2 residues coordinate Mn(2+): Asp15 and Ser65. The Phosphoserine intermediate role is filled by Ser65. Substrate-binding positions include His126, 156–157 (RD), Arg188, Arg194, 258–261 (RPDR), and Lys331. Asp398, His402, Asp439, His440, and His457 together coordinate Mn(2+).

This sequence belongs to the BPG-independent phosphoglycerate mutase family. Monomer. It depends on Mn(2+) as a cofactor.

The catalysed reaction is (2R)-2-phosphoglycerate = (2R)-3-phosphoglycerate. Its pathway is carbohydrate degradation; glycolysis; pyruvate from D-glyceraldehyde 3-phosphate: step 3/5. In terms of biological role, catalyzes the interconversion of 2-phosphoglycerate and 3-phosphoglycerate. This Nostoc sp. (strain PCC 7120 / SAG 25.82 / UTEX 2576) protein is 2,3-bisphosphoglycerate-independent phosphoglycerate mutase.